We begin with the raw amino-acid sequence, 497 residues long: Zinc finger protein 3 (497 aa).

The span at 1–20 (MGTEKKEGLPKEETSEDSKP) shows a compositional bias: basic and acidic residues. Residues 1–53 (MGTEKKEGLPKEETSEDSKPHGQTVEKLAQEVCHGHEFGEASEEDMSEGHLRE) form a disordered region. Glycyl lysine isopeptide (Lys-Gly) (interchain with G-Cter in SUMO2) cross-links involve residues K6 and K11. C2H2-type zinc fingers lie at residues 136-158 (HTCKECGKAFNQNSHLIQHMRVH), 164-186 (FECKECGKTFGTNSSLRRHQRIH), 192-214 (FACTECGKAFIQSSHLIHHHRIH), 220-242 (YKCEECGKAFSQNSALILHQRIH), 248-270 (YECNECGKTFRVSSQLIQHQRIH), 276-298 (HECSECGKAFKHSSGLIRHQKIH), 304-326 (YLCNECGKGFGQSSELIRHQRIH), 332-354 (YECSECGKTFGQNSEIIRHIRIH), 360-382 (YVCKECGKAFRGNSELLRHERIH), 388-410 (YECFECGKAFRRTSHLIVHQRIH), 416-438 (HQCNECARTFWDNSELLLHQKIH), 444-466 (YECSECEKTFSQHSQLTIHQRIH), and 472-494 (YECQECQKTFSRSSHLLRHQSVH).

Belongs to the krueppel C2H2-type zinc-finger protein family.

It localises to the nucleus. In terms of biological role, may be involved in transcriptional regulation. The sequence is that of Zinc finger protein 3 (Zfp3) from Mus musculus (Mouse).